The primary structure comprises 1078 residues: Nonribosomal peptide synthetase aneB (1078 aa).

The segment at 20-417 (FQQNVLDRPD…HGRKDTQVKI (398 aa)) is adenylation. In terms of domain architecture, Carrier spans 559–635 (MPTTPLERQM…TLCQHVSVRP (77 aa)). Ser-596 is subject to O-(pantetheine 4'-phosphoryl)serine. The interval 699 to 1013 (NYTLRLDVKL…HEMGYYGPVT (315 aa)) is condensation.

This sequence belongs to the NRP synthetase family.

It carries out the reaction holo-[peptidyl-carrier protein] + L-proline + ATP = L-prolyl-[peptidyl-carrier protein] + AMP + diphosphate. Its pathway is secondary metabolite biosynthesis. Its function is as follows. Nonribosomal peptide synthetase; part of the gene cluster that mediates the biosynthesis of aculenes, a unique type of norsesquiterpenes that contain a nordaucane skeleton linked to an L-proline moiety and are of mixed biosynthetic origin. The pathway begins with the synthesis of dauca-4,7-diene by the terpene cyclase aneC using farnesyl pyrophosphate (FPP) as substrate. The cytochrome P450 monooxygenase aneF then performs the initial oxidation at C-12 of dauca-4,7-diene to yield asperaculane D. Asperaculane D is substrate of the cytochrome P450 monooxygenase aneD for C-10 hydroxylation to yield asperaculane E. The cytochrome P450 monooxygenase aneG then converts asperaculane E into aculene D via C-2 oxidation. The monomodular nonribosomal peptide synthase aneB adenylates L-proline and the thiohydrolase aneE transfers this activated L-proline derivative to aculenes D and C to produce respectively aculenes B and A. The dioxygenase aneA converts aculene D into aculene C, and aculene B into aculene A by introducing the 5,6-alkene moiety. Asperculanes A, B, C and F, as well as 14-prolyl asperculane C, might be shunt products of the pathway. The protein is Nonribosomal peptide synthetase aneB of Aspergillus aculeatus (strain ATCC 16872 / CBS 172.66 / WB 5094).